The chain runs to 131 residues: Small ribosomal subunit protein bS6 (131 aa).

The tract at residues 96–131 (VTEASPMAKAKDERDSRRGPAGDRSYDEANAEEIAE) is disordered. Residues 104 to 122 (KAKDERDSRRGPAGDRSYD) show a composition bias toward basic and acidic residues.

Belongs to the bacterial ribosomal protein bS6 family.

Its function is as follows. Binds together with bS18 to 16S ribosomal RNA. The protein is Small ribosomal subunit protein bS6 of Shewanella sp. (strain MR-4).